The sequence spans 704 residues: Elongation factor G 2 (704 aa).

Positions 8 to 290 constitute a tr-type G domain; the sequence is ERYRNIGISA…AIIDYLPSPV (283 aa). GTP-binding positions include 17–24, 88–92, and 142–145; these read AHIDAGKT, DTPGH, and NKMD.

This sequence belongs to the TRAFAC class translation factor GTPase superfamily. Classic translation factor GTPase family. EF-G/EF-2 subfamily.

It localises to the cytoplasm. Functionally, catalyzes the GTP-dependent ribosomal translocation step during translation elongation. During this step, the ribosome changes from the pre-translocational (PRE) to the post-translocational (POST) state as the newly formed A-site-bound peptidyl-tRNA and P-site-bound deacylated tRNA move to the P and E sites, respectively. Catalyzes the coordinated movement of the two tRNA molecules, the mRNA and conformational changes in the ribosome. The polypeptide is Elongation factor G 2 (Polaromonas sp. (strain JS666 / ATCC BAA-500)).